A 73-amino-acid chain; its full sequence is Toxin Td4 (73 aa).

The N-terminal stretch at 1-7 (IGMVVEC) is a signal peptide. The 63-residue stretch at 8–70 (KDGYLVGNDG…TWDRATNRCG (63 aa)) folds into the LCN-type CS-alpha/beta domain. 4 disulfide bridges follow: cysteine 18–cysteine 69, cysteine 22–cysteine 44, cysteine 30–cysteine 50, and cysteine 34–cysteine 52. Arginine amide is present on arginine 71.

This sequence belongs to the long (4 C-C) scorpion toxin superfamily. Sodium channel inhibitor family. Beta subfamily. In terms of tissue distribution, expressed by the venom gland.

Its subcellular location is the secreted. Functionally, beta toxins bind voltage-independently at site-4 of sodium channels (Nav) and shift the voltage of activation toward more negative potentials thereby affecting sodium channel activation and promoting spontaneous and repetitive firing. This Tityus discrepans (Venezuelan scorpion) protein is Toxin Td4.